The chain runs to 623 residues: Chaperone protein HtpG (623 aa).

The interval 1-341 (MEKREFKAES…SQDLSLNISR (341 aa)) is a; substrate-binding. Residues 342–549 (EMLQHDRQLS…EGEVSIEMEK (208 aa)) form a b region. Positions 550-623 (ILSAMPNNQG…FTNDICKLMK (74 aa)) are c.

Belongs to the heat shock protein 90 family. In terms of assembly, homodimer.

It is found in the cytoplasm. Its function is as follows. Molecular chaperone. Has ATPase activity. In Clostridium perfringens (strain ATCC 13124 / DSM 756 / JCM 1290 / NCIMB 6125 / NCTC 8237 / Type A), this protein is Chaperone protein HtpG.